Here is a 472-residue protein sequence, read N- to C-terminus: Probable sterol O-acyltransferase 2 (472 aa).

Serine 12 is modified (phosphoserine). 3 consecutive transmembrane segments (helical) span residues 61–81 (FTGF…MSFL), 111–131 (LAMS…ALGY), and 135–155 (YGLG…HCVL). N-linked (GlcNAc...) asparagine glycosylation is present at asparagine 161. Residues 170 to 190 (FILHSMVILMKLHSYNVVNGW) traverse the membrane as a helical segment. Asparagine 233 carries an N-linked (GlcNAc...) asparagine glycan. Transmembrane regions (helical) follow at residues 262 to 282 (IHYL…LVII) and 317 to 337 (TVAF…WVIF). N-linked (GlcNAc...) asparagine glycosylation is present at asparagine 342. The FYXDWWN motif signature appears at 355–361 (FYDDWWN). Histidine 409 is an active-site residue. The helical transmembrane segment at 452-472 (IAFWFSIIIGIALIAALYILF) threads the bilayer.

It belongs to the membrane-bound acyltransferase family. Sterol o-acyltransferase subfamily.

The protein resides in the endoplasmic reticulum membrane. Sterol O-acyltransferase that catalyzes the formation of stery esters. The polypeptide is Probable sterol O-acyltransferase 2 (are2) (Schizosaccharomyces pombe (strain 972 / ATCC 24843) (Fission yeast)).